Reading from the N-terminus, the 445-residue chain is N-succinylarginine dihydrolase (445 aa).

Residues 19 to 28 (AGLSFGNVAS), N110, and 137 to 138 (HR) contribute to the substrate site. E174 is a catalytic residue. R214 provides a ligand contact to substrate. H250 is an active-site residue. Substrate is bound by residues D252 and N363. The active-site Nucleophile is the C369.

The protein belongs to the succinylarginine dihydrolase family. As to quaternary structure, homodimer.

It carries out the reaction N(2)-succinyl-L-arginine + 2 H2O + 2 H(+) = N(2)-succinyl-L-ornithine + 2 NH4(+) + CO2. It participates in amino-acid degradation; L-arginine degradation via AST pathway; L-glutamate and succinate from L-arginine: step 2/5. In terms of biological role, catalyzes the hydrolysis of N(2)-succinylarginine into N(2)-succinylornithine, ammonia and CO(2). This Shewanella pealeana (strain ATCC 700345 / ANG-SQ1) protein is N-succinylarginine dihydrolase.